Consider the following 341-residue polypeptide: L-threonine 3-dehydrogenase (341 aa).

Cys-38 contacts Zn(2+). Catalysis depends on charge relay system residues Thr-40 and His-43. 6 residues coordinate Zn(2+): His-63, Glu-64, Cys-93, Cys-96, Cys-99, and Cys-107. Residues Ile-175, Asp-195, Arg-200, 262-264 (LGI), and 286-287 (IY) contribute to the NAD(+) site.

Belongs to the zinc-containing alcohol dehydrogenase family. In terms of assembly, homotetramer. Zn(2+) is required as a cofactor.

The protein localises to the cytoplasm. The catalysed reaction is L-threonine + NAD(+) = (2S)-2-amino-3-oxobutanoate + NADH + H(+). It participates in amino-acid degradation; L-threonine degradation via oxydo-reductase pathway; glycine from L-threonine: step 1/2. Its function is as follows. Catalyzes the NAD(+)-dependent oxidation of L-threonine to 2-amino-3-ketobutyrate. The chain is L-threonine 3-dehydrogenase from Alteromonas mediterranea (strain DSM 17117 / CIP 110805 / LMG 28347 / Deep ecotype).